A 455-amino-acid chain; its full sequence is Protein FAM124B (455 aa).

S49 is modified (phosphoserine). The disordered stretch occupies residues 270 to 322 (TSVSAKRTSEPRSQRNQGKRSQGHSLELPEPSGSPTSDRCAGTSWKSPGRSFQ). The segment covering 313 to 322 (SWKSPGRSFQ) has biased composition (polar residues).

It belongs to the FAM124 family. Interacts with CHD7 and CHD8.

It is found in the nucleus. This chain is Protein FAM124B (FAM124B), found in Homo sapiens (Human).